The following is a 407-amino-acid chain: Arginine deiminase (407 aa).

Catalysis depends on Cys397, which acts as the Amidino-cysteine intermediate.

It belongs to the arginine deiminase family.

The protein localises to the cytoplasm. The enzyme catalyses L-arginine + H2O = L-citrulline + NH4(+). It participates in amino-acid degradation; L-arginine degradation via ADI pathway; carbamoyl phosphate from L-arginine: step 1/2. The sequence is that of Arginine deiminase from Listeria welshimeri serovar 6b (strain ATCC 35897 / DSM 20650 / CCUG 15529 / CIP 8149 / NCTC 11857 / SLCC 5334 / V8).